The sequence spans 307 residues: 4-hydroxy-3-methylbut-2-enyl diphosphate reductase (307 aa).

Residue cysteine 13 participates in [4Fe-4S] cluster binding. Histidine 42 and histidine 75 together coordinate (2E)-4-hydroxy-3-methylbut-2-enyl diphosphate. Dimethylallyl diphosphate contacts are provided by histidine 42 and histidine 75. Isopentenyl diphosphate-binding residues include histidine 42 and histidine 75. Position 97 (cysteine 97) interacts with [4Fe-4S] cluster. Histidine 125 lines the (2E)-4-hydroxy-3-methylbut-2-enyl diphosphate pocket. Histidine 125 provides a ligand contact to dimethylallyl diphosphate. Histidine 125 contacts isopentenyl diphosphate. The active-site Proton donor is the glutamate 127. Threonine 165 is a binding site for (2E)-4-hydroxy-3-methylbut-2-enyl diphosphate. Residue cysteine 195 coordinates [4Fe-4S] cluster. Residues serine 223, serine 224, asparagine 225, and serine 267 each coordinate (2E)-4-hydroxy-3-methylbut-2-enyl diphosphate. Dimethylallyl diphosphate contacts are provided by serine 223, serine 224, asparagine 225, and serine 267. Positions 223, 224, 225, and 267 each coordinate isopentenyl diphosphate.

The protein belongs to the IspH family. [4Fe-4S] cluster is required as a cofactor.

The catalysed reaction is isopentenyl diphosphate + 2 oxidized [2Fe-2S]-[ferredoxin] + H2O = (2E)-4-hydroxy-3-methylbut-2-enyl diphosphate + 2 reduced [2Fe-2S]-[ferredoxin] + 2 H(+). It carries out the reaction dimethylallyl diphosphate + 2 oxidized [2Fe-2S]-[ferredoxin] + H2O = (2E)-4-hydroxy-3-methylbut-2-enyl diphosphate + 2 reduced [2Fe-2S]-[ferredoxin] + 2 H(+). It participates in isoprenoid biosynthesis; dimethylallyl diphosphate biosynthesis; dimethylallyl diphosphate from (2E)-4-hydroxy-3-methylbutenyl diphosphate: step 1/1. Its pathway is isoprenoid biosynthesis; isopentenyl diphosphate biosynthesis via DXP pathway; isopentenyl diphosphate from 1-deoxy-D-xylulose 5-phosphate: step 6/6. In terms of biological role, catalyzes the conversion of 1-hydroxy-2-methyl-2-(E)-butenyl 4-diphosphate (HMBPP) into a mixture of isopentenyl diphosphate (IPP) and dimethylallyl diphosphate (DMAPP). Acts in the terminal step of the DOXP/MEP pathway for isoprenoid precursor biosynthesis. In Chlamydia trachomatis serovar L2b (strain UCH-1/proctitis), this protein is 4-hydroxy-3-methylbut-2-enyl diphosphate reductase.